Reading from the N-terminus, the 149-residue chain is Nucleoside diphosphate kinase (149 aa).

Residues Lys9, Phe57, Arg85, Thr91, Arg102, and Asn112 each coordinate ATP. The Pros-phosphohistidine intermediate role is filled by His115.

The protein belongs to the NDK family. In terms of assembly, homotetramer. Mg(2+) is required as a cofactor.

The protein localises to the cytoplasm. It catalyses the reaction a 2'-deoxyribonucleoside 5'-diphosphate + ATP = a 2'-deoxyribonucleoside 5'-triphosphate + ADP. It carries out the reaction a ribonucleoside 5'-diphosphate + ATP = a ribonucleoside 5'-triphosphate + ADP. Functionally, major role in the synthesis of nucleoside triphosphates other than ATP. The ATP gamma phosphate is transferred to the NDP beta phosphate via a ping-pong mechanism, using a phosphorylated active-site intermediate. The protein is Nucleoside diphosphate kinase of Carboxydothermus hydrogenoformans (strain ATCC BAA-161 / DSM 6008 / Z-2901).